Consider the following 104-residue polypeptide: Iron-sulfur cluster assembly protein CyaY (104 aa).

The protein belongs to the frataxin family.

Its function is as follows. Involved in iron-sulfur (Fe-S) cluster assembly. May act as a regulator of Fe-S biogenesis. This Tolumonas auensis (strain DSM 9187 / NBRC 110442 / TA 4) protein is Iron-sulfur cluster assembly protein CyaY.